The primary structure comprises 332 residues: RING finger protein 225 (332 aa).

The tract at residues 1 to 55 (MPCPRLPWLRRHRTSQGSGPSSPSTVSAPNSPSRGEDEDAEEEEGDGTPGSGPIL) is disordered. Over residues 15-27 (SQGSGPSSPSTVS) the composition is skewed to low complexity. A compositionally biased stretch (acidic residues) spans 36 to 46 (EDEDAEEEEGD). The RING-type zinc finger occupies 63–111 (CLICVSPFDGIFKLPKRLDCGHVFCLECLARLSLATAGGGDAVACPMCR). The disordered stretch occupies residues 121–187 (GLPALPTQPG…PPPLRLGRPL (67 aa)). Residues 205-225 (ALAVLVAAGLVVSGVYIFFLI) traverse the membrane as a helical segment. Positions 259–332 (THAWTRRPTK…ADGKKVQLQQ (74 aa)) are disordered. 2 stretches are compositionally biased toward basic and acidic residues: residues 280-295 (ATKD…KDPV) and 323-332 (ADGKKVQLQQ).

It is found in the membrane. This chain is RING finger protein 225, found in Mus musculus (Mouse).